A 149-amino-acid polypeptide reads, in one-letter code: 3-dehydroquinate dehydratase (149 aa).

The Proton acceptor role is filled by tyrosine 22. Positions 74, 80, and 87 each coordinate substrate. Histidine 100 serves as the catalytic Proton donor. Residues 101–102 and arginine 111 contribute to the substrate site; that span reads LS.

Belongs to the type-II 3-dehydroquinase family. In terms of assembly, homododecamer.

The catalysed reaction is 3-dehydroquinate = 3-dehydroshikimate + H2O. It functions in the pathway metabolic intermediate biosynthesis; chorismate biosynthesis; chorismate from D-erythrose 4-phosphate and phosphoenolpyruvate: step 3/7. Functionally, catalyzes a trans-dehydration via an enolate intermediate. This is 3-dehydroquinate dehydratase from Vesicomyosocius okutanii subsp. Calyptogena okutanii (strain HA).